Here is a 146-residue protein sequence, read N- to C-terminus: Ribosomal RNA large subunit methyltransferase H (146 aa).

Residues L62, G94, and 113–118 (LGELTL) each bind S-adenosyl-L-methionine.

Belongs to the RNA methyltransferase RlmH family. As to quaternary structure, homodimer.

It is found in the cytoplasm. The catalysed reaction is pseudouridine(1915) in 23S rRNA + S-adenosyl-L-methionine = N(3)-methylpseudouridine(1915) in 23S rRNA + S-adenosyl-L-homocysteine + H(+). Its function is as follows. Specifically methylates the pseudouridine at position 1915 (m3Psi1915) in 23S rRNA. The polypeptide is Ribosomal RNA large subunit methyltransferase H (Deinococcus radiodurans (strain ATCC 13939 / DSM 20539 / JCM 16871 / CCUG 27074 / LMG 4051 / NBRC 15346 / NCIMB 9279 / VKM B-1422 / R1)).